We begin with the raw amino-acid sequence, 296 residues long: Chronophin (296 aa).

The active-site Nucleophile is the Asp-25. 2 residues coordinate Mg(2+): Asp-25 and Asn-27. The active-site Proton donor is Asn-27. Substrate contacts are provided by residues 58 to 60 (SNN), His-182, and Lys-213. Asp-238 is a binding site for Mg(2+).

It belongs to the HAD-like hydrolase superfamily. Homodimer. Mg(2+) serves as cofactor. As to expression, detected in brain (at protein level).

It localises to the cytoplasm. The protein localises to the cytosol. Its subcellular location is the cytoskeleton. The protein resides in the cell projection. It is found in the ruffle membrane. It localises to the lamellipodium membrane. The protein localises to the cell membrane. The enzyme catalyses pyridoxal 5'-phosphate + H2O = pyridoxal + phosphate. It catalyses the reaction pyridoxine 5'-phosphate + H2O = pyridoxine + phosphate. The catalysed reaction is pyridoxamine + phosphate = pyridoxamine 5'-phosphate + H2O. It carries out the reaction O-phospho-L-seryl-[protein] + H2O = L-seryl-[protein] + phosphate. Functionally, functions as a pyridoxal phosphate (PLP) phosphatase, which also catalyzes the dephosphorylation of pyridoxine 5'-phosphate (PNP) and pyridoxamine 5'-phosphate (PMP), with order of substrate preference PLP &gt; PNP &gt; PMP and therefore plays a role in vitamin B6 metabolism. Also functions as a protein serine phosphatase that specifically dephosphorylates 'Ser-3' in proteins of the actin-depolymerizing factor (ADF)/cofilin family like CFL1 and DSTN. Thereby, regulates cofilin-dependent actin cytoskeleton reorganization, being required for normal progress through mitosis and normal cytokinesis. Does not dephosphorylate phosphothreonines in LIMK1. Does not dephosphorylate peptides containing phosphotyrosine. The chain is Chronophin from Bos taurus (Bovine).